Consider the following 745-residue polypeptide: MEVMNLIEQPIKVTEWQQTYTYDSGIHSGVNTCVPSVSSKGIMDEDDACGRQYTLKKTTTYTQGVPQNQGDLEYQMSTTARAKRVREAMCPGVSGEDSSLLLATQVEGQTTNLQRLAEPSQLLKSAIVHLINYQDDAELATRALPELTKLLNDEDPVVVTKAAMIVNQLSKKEASRRALMGSPQLVAAVVRTMQNTSDLDTARCTTSILHNLSHHREGLLAIFKSGGIPALVRMLSSPVESVLFYAITTLHNLLLYQEGAKMAVRLADGLQKMVPLLNKNNPKFLAITTDCLQLLAYGNQESKLIILANGGPQGLVQIMRNYSYEKLLWTTSRVLKVLSVCPSNKPAIVEAGGMQALGKHLTSNSPRLVQNCLWTLRNLSDVATKQEGLESVLKILVNQLSVDDVNVLTCATGTLSNLTCNNSKNKTLVTQNSGVEALIHAILRAGDKDDITEPAVCALRHLTSRHPEAEMAQNSVRLNYGIPAIVKLLNQPNQWPLVKATIGLIRNLALCPANHAPLQEAAVIPRLVQLLVKAHQDAQRHVAAGTQQPYTDGVRMEEIVEGCTGALHILARDPMNRMEIFRLNTIPLFVQLLYSSVENIQRVAAGVLCELAQDKEAADAIDAEGASAPLMELLHSRNEGTATYAAAVLFRISEDKNPDYRKRVSVELTNSLFKHDPAAWEAAQSMIPINEPYADDMDATYRPMYSSDVPLDPLDMHMDLDGDYPMDTYSDGLRPPYPTADHMLA.

Residue Met-1 is modified to N-acetylmethionine. The O-linked (GlcNAc) threonine glycan is linked to Thr-14. Residues Ser-99 and Ser-125 each carry the phosphoserine modification. 12 ARM repeats span residues 132–171, 172–215, 216–255, 258–297, 298–341, 342–381, 383–420, 423–464, 470–510, 512–551, 574–613, and 615–661; these read NYQDDAELATRALPELTKLLNDEDPVVVTKAAMIVNQLSK, KEAS…LSHH, REGLLAIFKSGGIPALVRMLSSPVESVLFYAITTLHNLLL, EGAKMAVRLADGLQKMVPLLNKNNPKFLAITTDCLQLLAY, GNQE…LSVC, PSNKPAIVEAGGMQALGKHLTSNSPRLVQNCLWTLRNLSD, ATKQEGLESVLKILVNQLSVDDVNVLTCATGTLSNLTC, SKNK…HLTS, EMAQ…NLAL, PANHAPLQEAAVIPRLVQLLVKAHQDAQRHVAAGTQQPYT, PMNRMEIFRLNTIPLFVQLLYSSVENIQRVAAGVLCELAQ, and KEAA…PDYR. Positions 132–297 are interaction with DSC1 and DSG1; sequence NYQDDAELAT…TTDCLQLLAY (166 aa). Ser-182 is modified (phosphoserine). Residues 574 to 661 are interaction with DSC1; the sequence is PMNRMEIFRL…ISEDKNPDYR (88 aa). Phosphoserine is present on residues Ser-665 and Ser-730.

This sequence belongs to the beta-catenin family. Homodimer. Component of an E-cadherin/catenin adhesion complex composed of at least E-cadherin/CDH1 and gamma-catenin/JUP, and possibly alpha-catenin/CTNNA1; the complex is located to adherens junctions. The stable association of CTNNA1 is controversial as CTNNA1 was shown not to bind to F-actin when assembled in the complex. Interacts with MUC1. Interacts with CAV1. Interacts with PTPRJ. Interacts with DSG1. Interacts with DSC1 and DSC2. Interacts with PKP2. Interacts with PKP3 (via N-terminus); the interaction is required for PKP3 localization to desmosome cell-cell junctions. Interacts with DSG4. Post-translationally, may be phosphorylated by FER. Expressed in the mammary epithelium (at protein level).

The protein localises to the cell junction. The protein resides in the adherens junction. Its subcellular location is the desmosome. It localises to the cytoplasm. It is found in the cytoskeleton. The protein localises to the cell membrane. The protein resides in the nucleus. Common junctional plaque protein. The membrane-associated plaques are architectural elements in an important strategic position to influence the arrangement and function of both the cytoskeleton and the cells within the tissue. The presence of plakoglobin in both the desmosomes and in the intermediate junctions suggests that it plays a central role in the structure and function of submembranous plaques. Acts as a substrate for VE-PTP and is required by it to stimulate VE-cadherin function in endothelial cells. Can replace beta-catenin in E-cadherin/catenin adhesion complexes which are proposed to couple cadherins to the actin cytoskeleton. The polypeptide is Junction plakoglobin (Mus musculus (Mouse)).